We begin with the raw amino-acid sequence, 457 residues long: Argininosuccinate lyase (457 aa).

It belongs to the lyase 1 family. Argininosuccinate lyase subfamily.

It localises to the cytoplasm. It catalyses the reaction 2-(N(omega)-L-arginino)succinate = fumarate + L-arginine. It participates in amino-acid biosynthesis; L-arginine biosynthesis; L-arginine from L-ornithine and carbamoyl phosphate: step 3/3. This Shewanella sediminis (strain HAW-EB3) protein is Argininosuccinate lyase.